The following is a 1088-amino-acid chain: Methionine S-methyltransferase (1088 aa).

The protein belongs to the class I-like SAM-binding methyltransferase superfamily. In terms of assembly, homotetramer. As to expression, expressed in the shoot, scutellum, and aleurone cells but not in the root or endosperm.

Its subcellular location is the cytoplasm. It catalyses the reaction L-methionine + S-adenosyl-L-methionine = S-methyl-L-methionine + S-adenosyl-L-homocysteine. Functionally, catalyzes the S-methylmethionine (SMM) biosynthesis from adenosyl-L-homocysteine (AdoMet) and methionine. SMM biosynthesis (by MMT1) and degradation (by HMT-1, HMT-2 and HMT-3) constitute the SMM cycle in plants, which is probably required to achieve short term control of AdoMet level. Also able to catalyze the selenium-methylmethionine (SeMM) from AdoMet and selenium-methionine (SeMet). May play a role in phoem sulfur transport; such function is however not essential. This is Methionine S-methyltransferase (MMT1) from Hordeum vulgare (Barley).